A 635-amino-acid polypeptide reads, in one-letter code: Threonine--tRNA ligase (635 aa).

One can recognise a TGS domain in the interval Met1–Thr61. The segment at Asp242–Pro532 is catalytic. Residues Cys333, His384, and His509 each coordinate Zn(2+).

Belongs to the class-II aminoacyl-tRNA synthetase family. As to quaternary structure, homodimer. Requires Zn(2+) as cofactor.

It is found in the cytoplasm. It catalyses the reaction tRNA(Thr) + L-threonine + ATP = L-threonyl-tRNA(Thr) + AMP + diphosphate + H(+). In terms of biological role, catalyzes the attachment of threonine to tRNA(Thr) in a two-step reaction: L-threonine is first activated by ATP to form Thr-AMP and then transferred to the acceptor end of tRNA(Thr). Also edits incorrectly charged L-seryl-tRNA(Thr). This chain is Threonine--tRNA ligase, found in Acetivibrio thermocellus (strain ATCC 27405 / DSM 1237 / JCM 9322 / NBRC 103400 / NCIMB 10682 / NRRL B-4536 / VPI 7372) (Clostridium thermocellum).